The following is a 306-amino-acid chain: N-acetylmuramic acid 6-phosphate etherase (306 aa).

In terms of domain architecture, SIS spans 59–222 (TAQALGRGGR…STGVMVCLGK (164 aa)). Residue glutamate 87 is the Proton donor of the active site. Glutamate 118 is an active-site residue.

It belongs to the GCKR-like family. MurNAc-6-P etherase subfamily. As to quaternary structure, homodimer.

The enzyme catalyses N-acetyl-D-muramate 6-phosphate + H2O = N-acetyl-D-glucosamine 6-phosphate + (R)-lactate. Its pathway is amino-sugar metabolism; N-acetylmuramate degradation. Functionally, specifically catalyzes the cleavage of the D-lactyl ether substituent of MurNAc 6-phosphate, producing GlcNAc 6-phosphate and D-lactate. The sequence is that of N-acetylmuramic acid 6-phosphate etherase from Rippkaea orientalis (strain PCC 8801 / RF-1) (Cyanothece sp. (strain PCC 8801)).